The primary structure comprises 507 residues: Tryptophan aminotransferase-related protein 2 (507 aa).

Residues Pro-91 to Val-135 form a disordered region. Pyridoxal 5'-phosphate contacts are provided by residues Tyr-169, Ser-211–Thr-212, Asn-282, Asp-304–Tyr-307, Thr-327–Lys-330, and Arg-338. Position 330 is an N6-(pyridoxal phosphate)lysine (Lys-330).

This sequence belongs to the alliinase family. The cofactor is pyridoxal 5'-phosphate. As to expression, widely expressed.

The catalysed reaction is L-tryptophan + 2-oxoglutarate = indole-3-pyruvate + L-glutamate. The protein operates within plant hormone metabolism; auxin biosynthesis. In terms of biological role, probable tryptophan aminotransferase involved in auxin (IAA) biosynthesis. Required for auxin production to initiate multiple change in growth in response to environmental and developmental cues. Functions upstream of YUCCA1 in auxin biosynthesis. Required for polar auxin transport. The sequence is that of Tryptophan aminotransferase-related protein 2 from Oryza sativa subsp. japonica (Rice).